Consider the following 371-residue polypeptide: Bifunctional enzyme IspD/IspF (371 aa).

The tract at residues 1-210 (MSEMSLIMLA…LNLPTPSFEI (210 aa)) is 2-C-methyl-D-erythritol 4-phosphate cytidylyltransferase. A 2-C-methyl-D-erythritol 2,4-cyclodiphosphate synthase region spans residues 211-371 (FTGNGFDVHE…NLKYFDWTRL (161 aa)). Aspartate 217 and histidine 219 together coordinate a divalent metal cation. Residues 217–219 (DVH) and 243–244 (HS) each bind 4-CDP-2-C-methyl-D-erythritol 2-phosphate. An a divalent metal cation-binding site is contributed by histidine 251. 4-CDP-2-C-methyl-D-erythritol 2-phosphate contacts are provided by residues 265 to 267 (DIG), 270 to 274 (YPDTD), 341 to 344 (TTTE), phenylalanine 348, and arginine 351.

It in the N-terminal section; belongs to the IspD/TarI cytidylyltransferase family. IspD subfamily. This sequence in the C-terminal section; belongs to the IspF family. The cofactor is a divalent metal cation.

The enzyme catalyses 2-C-methyl-D-erythritol 4-phosphate + CTP + H(+) = 4-CDP-2-C-methyl-D-erythritol + diphosphate. It catalyses the reaction 4-CDP-2-C-methyl-D-erythritol 2-phosphate = 2-C-methyl-D-erythritol 2,4-cyclic diphosphate + CMP. It participates in isoprenoid biosynthesis; isopentenyl diphosphate biosynthesis via DXP pathway; isopentenyl diphosphate from 1-deoxy-D-xylulose 5-phosphate: step 2/6. Its pathway is isoprenoid biosynthesis; isopentenyl diphosphate biosynthesis via DXP pathway; isopentenyl diphosphate from 1-deoxy-D-xylulose 5-phosphate: step 4/6. Its function is as follows. Bifunctional enzyme that catalyzes the formation of 4-diphosphocytidyl-2-C-methyl-D-erythritol from CTP and 2-C-methyl-D-erythritol 4-phosphate (MEP) (IspD), and catalyzes the conversion of 4-diphosphocytidyl-2-C-methyl-D-erythritol 2-phosphate (CDP-ME2P) to 2-C-methyl-D-erythritol 2,4-cyclodiphosphate (ME-CPP) with a corresponding release of cytidine 5-monophosphate (CMP) (IspF). In Campylobacter jejuni (strain RM1221), this protein is Bifunctional enzyme IspD/IspF.